The sequence spans 162 residues: Transcription elongation factor GreA (162 aa).

Residues E44–A72 adopt a coiled-coil conformation.

The protein belongs to the GreA/GreB family.

In terms of biological role, necessary for efficient RNA polymerase transcription elongation past template-encoded arresting sites. The arresting sites in DNA have the property of trapping a certain fraction of elongating RNA polymerases that pass through, resulting in locked ternary complexes. Cleavage of the nascent transcript by cleavage factors such as GreA or GreB allows the resumption of elongation from the new 3'terminus. GreA releases sequences of 2 to 3 nucleotides. The sequence is that of Transcription elongation factor GreA from Nautilia profundicola (strain ATCC BAA-1463 / DSM 18972 / AmH).